Consider the following 704-residue polypeptide: Phosphate acetyltransferase (704 aa).

Residues 380–704 form a phosphate acetyltransferase region; the sequence is FNLIEKAKRN…IQAQAEKGLI (325 aa).

In the N-terminal section; belongs to the CobB/CobQ family. This sequence in the C-terminal section; belongs to the phosphate acetyltransferase and butyryltransferase family. As to quaternary structure, homohexamer.

The protein localises to the cytoplasm. It carries out the reaction acetyl-CoA + phosphate = acetyl phosphate + CoA. It functions in the pathway metabolic intermediate biosynthesis; acetyl-CoA biosynthesis; acetyl-CoA from acetate: step 2/2. Involved in acetate metabolism. The protein is Phosphate acetyltransferase (pta) of Nitratidesulfovibrio vulgaris (strain ATCC 29579 / DSM 644 / CCUG 34227 / NCIMB 8303 / VKM B-1760 / Hildenborough) (Desulfovibrio vulgaris).